The following is a 630-amino-acid chain: Cytochrome B pre-mRNA-processing protein 2 (630 aa).

The protein resides in the mitochondrion. Functionally, appears to be specifically required for the splicing of the terminal intron (bI5) of the cytochrome b pre-mRNA. Can also stimulates the splicing of the omega intron of the precursor of large ribosomal RNA. In Saccharomyces cerevisiae (strain ATCC 204508 / S288c) (Baker's yeast), this protein is Cytochrome B pre-mRNA-processing protein 2 (CBP2).